A 484-amino-acid polypeptide reads, in one-letter code: UDP-N-acetylmuramate--L-alanine ligase (484 aa).

123–129 serves as a coordination point for ATP; that stretch reads GTHGKTT.

It belongs to the MurCDEF family.

Its subcellular location is the cytoplasm. It carries out the reaction UDP-N-acetyl-alpha-D-muramate + L-alanine + ATP = UDP-N-acetyl-alpha-D-muramoyl-L-alanine + ADP + phosphate + H(+). It participates in cell wall biogenesis; peptidoglycan biosynthesis. Cell wall formation. This chain is UDP-N-acetylmuramate--L-alanine ligase, found in Pseudomonas fluorescens (strain ATCC BAA-477 / NRRL B-23932 / Pf-5).